The chain runs to 329 residues: Isopenicillin N synthase (329 aa).

Residues R87, Y91, and Y189 each coordinate isopenicillin N. Residues R87, Y91, Y189, H212, and D214 each coordinate N-[(5S)-5-amino-5-carboxypentanoyl]-L-cysteinyl-D-valine. Residues 180-286 enclose the Fe2OG dioxygenase domain; that stretch reads TLSAVTLIHY…RLSLPFFLHA (107 aa). H212, D214, and H268 together coordinate Fe(2+). R277 serves as a coordination point for 2-oxoglutarate. S279 provides a ligand contact to isopenicillin N. Residue S279 coordinates N-[(5S)-5-amino-5-carboxypentanoyl]-L-cysteinyl-D-valine.

The protein belongs to the iron/ascorbate-dependent oxidoreductase family. Fe cation is required as a cofactor. L-ascorbate serves as cofactor.

The enzyme catalyses N-[(5S)-5-amino-5-carboxypentanoyl]-L-cysteinyl-D-valine + O2 = isopenicillin N + 2 H2O. It functions in the pathway antibiotic biosynthesis; penicillin G biosynthesis; penicillin G from L-alpha-aminoadipate and L-cysteine and L-valine: step 2/3. Functionally, removes, in the presence of oxygen, 4 hydrogen atoms from delta-L-(alpha-aminoadipyl)-L-cysteinyl-D-valine (ACV) to form the azetidinone and thiazolidine rings of isopenicillin. The sequence is that of Isopenicillin N synthase (pcbC) from Streptomyces griseus.